A 135-amino-acid polypeptide reads, in one-letter code: ATP synthase epsilon chain (135 aa).

It belongs to the ATPase epsilon chain family. In terms of assembly, F-type ATPases have 2 components, CF(1) - the catalytic core - and CF(0) - the membrane proton channel. CF(1) has five subunits: alpha(3), beta(3), gamma(1), delta(1), epsilon(1). CF(0) has three main subunits: a, b and c.

It is found in the cell inner membrane. Functionally, produces ATP from ADP in the presence of a proton gradient across the membrane. This is ATP synthase epsilon chain from Rhodopseudomonas palustris (strain BisB5).